A 46-amino-acid polypeptide reads, in one-letter code: Mu-hexatoxin-Mg2a (46 aa).

Disulfide bonds link C3–C18, C10–C24, C17–C36, C21–C43, and C26–C34.

Belongs to the neurotoxin 02 (plectoxin) family. 02 (plectoxin) subfamily. Expressed by the venom gland.

It is found in the secreted. Competes for binding at site 3 of the insect voltage-gated sodium channel (Nav). Insecticidal neurotoxin. Causes temporary paralysis to lepidopteran larvae (10.3 nmol/g) or to crickets (doses from 0.93 to 119 ug/g). Is not toxic to mice when injected intracranially (high doses). This Macrothele gigas (Japanese funnel web spider) protein is Mu-hexatoxin-Mg2a.